A 150-amino-acid chain; its full sequence is UPF0756 membrane protein ECA1265 (150 aa).

The next 4 helical transmembrane spans lie at 1–21, 51–71, 82–102, and 127–147; these read MAYI…GIIS, YGLS…IASG, FLHW…WLGG, and ALFR…SLLI.

Belongs to the UPF0756 family.

It is found in the cell membrane. The sequence is that of UPF0756 membrane protein ECA1265 from Pectobacterium atrosepticum (strain SCRI 1043 / ATCC BAA-672) (Erwinia carotovora subsp. atroseptica).